The sequence spans 151 residues: Large ribosomal subunit protein bL9 (151 aa).

The protein belongs to the bacterial ribosomal protein bL9 family.

Binds to the 23S rRNA. This chain is Large ribosomal subunit protein bL9, found in Desulfosudis oleivorans (strain DSM 6200 / JCM 39069 / Hxd3) (Desulfococcus oleovorans).